Consider the following 243-residue polypeptide: MDPWIALSSPLTSQTVEYVANTLRIMCAISWNISYMSMAYYSFRDKTYGNALIPLCNNIAWEFVYSFIHCPKLTFVRIENTGWFLLNIVVMYAAIKYSENEWKHAPLVQRNLPFIFAVGISAMIAGHLALAAQIGPRIAFVWSAKGCQLVLSTGALSQLLSRGSTRGGSYVVWLSRYLGTVFIDVMVTIRHVYRAAGPSWPSSPLLLWFMAVFHLLDWTYGFCFYHIRRQELVSEAAEKDKDK.

The next 7 membrane-spanning stretches (helical) occupy residues 20-42, 51-71, 75-95, 112-132, 138-160, 169-189, and 205-225; these read ANTLRIMCAISWNISYMSMAYYS, ALIPLCNNIAWEFVYSFIHCP, FVRIENTGWFLLNIVVMYAAI, LPFIFAVGISAMIAGHLALAA, IAFVWSAKGCQLVLSTGALSQLL, SYVVWLSRYLGTVFIDVMVTI, and LLLWFMAVFHLLDWTYGFCFY.

Belongs to the paxB family.

Its subcellular location is the membrane. The catalysed reaction is (3R)-[(10S)-11-epoxyfarnesyl]-2,3,5-trimethyl-6-oxido-4-oxocyclohexa-1,5-diene-1-carboxylate + H(+) = asnovolin H. It functions in the pathway secondary metabolite biosynthesis; terpenoid biosynthesis. Functionally, terpene cyclase; part of the gene cluster that mediates the biosynthesis of novofumigatonin, a heavily oxygenated meroterpenoid containing a unique orthoester moiety. The first step of the pathway is the synthesis of 3,5-dimethylorsellinic acid (DMOA) by the polyketide synthase nvfA via condensation of one acetyl-CoA starter unit with 3 malonyl-CoA units and 2 methylations. DMOA is then converted to farnesyl-DMOA by the farnesyltransferase nvfB. Epoxydation by FAD-dependent monooxygenase nvfK, followed by a protonation-initiated cyclization catalyzed by the terpene cyclase nvfL leads to the production of asnavolin H. The short chain dehydrogenase nvfC then as a 3-OH dehydrogenase of asnovolin H to yield chemesin D. There are two branches to synthesize asnovolin A from chemesin D. In one branch, chemesin D undergoes Baeyer-Villiger oxidation by nvfH, methylation by nvfJ, and enoyl reduction by the nvfM D enoylreductase that reduces the double bond between C-5'and C-6', to form respectively asnovolin I, asnovolin K, and asnovolin A. In the other branch, the methylation precedes the Baeyer-Villiger oxidation and the enoyl reduction to yield asnovolin A via the asnovolin J intermediate. Asnovolin A is further converted to fumigatonoid A by the Fe(II)/2-oxoglutarate-dependent dioxygenase nvfI that catalyzes an endoperoxidation reaction. The alpha/beta hydrolase nvfD then acts as an epimerase that converts fumigatonoid A to its C-5' epimer, which then undergoes spontaneous or nvfD-catalyzed lactonization. The following step utilizes the ketoreductase nvfG to produce fumigatonoid B. The dioxygenase nvfE further converts fumigatonoid B into fumigatonoid C. Finally the Fe(II)/2-oxoglutarate-dependent dioxygenase nvfF catalyzes two rounds of oxidation to transform fumigatonoid C into the end product, novofumigatonin A. This chain is Asnovolin H synthase nvfL, found in Aspergillus novofumigatus (strain IBT 16806).